Here is a 239-residue protein sequence, read N- to C-terminus: Small ribosomal subunit protein uS2 (239 aa).

Belongs to the universal ribosomal protein uS2 family.

The polypeptide is Small ribosomal subunit protein uS2 (Prochlorococcus marinus (strain MIT 9313)).